Reading from the N-terminus, the 158-residue chain is UPF0260 protein RL1394 (158 aa).

It belongs to the UPF0260 family.

This is UPF0260 protein RL1394 from Rhizobium johnstonii (strain DSM 114642 / LMG 32736 / 3841) (Rhizobium leguminosarum bv. viciae).